The following is a 311-amino-acid chain: Probable mitochondrial phosphate carrier protein (311 aa).

The Mitochondrial intermembrane portion of the chain corresponds to 1–23 (MSTPLIPPAPPKKTLQLYTPQYY). 3 Solcar repeats span residues 21 to 105 (QYYG…FKHK), 118 to 203 (YRTS…IVEA), and 219 to 303 (EKIG…FKIM). The chain crosses the membrane as a helical span at residues 24–44 (GLCTLGGLLACGTTHSAITPL). Topologically, residues 45–67 (DLIKCRKQVNPNIYPGNIAGFKT) are mitochondrial matrix. Residues 68–88 (ILSKEGLRGLYTGGMPTLIGY) traverse the membrane as a helical segment. At 89 to 120 (SLQGCGKYGFYELFKHKYSTLVGAQKAHEYRT) the chain is on the mitochondrial intermembrane side. A helical membrane pass occupies residues 121–141 (SIYLAASASAELLADIMLCPM). The Mitochondrial matrix portion of the chain corresponds to 142-171 (EAIKVRVQTSNPRFANTTREAWSKIVTNEG). Residues 172–192 (FGTLYRGLAPLWFRQIPYTMM) form a helical membrane-spanning segment. Residues 193 to 220 (KFASFERIVEALYTYIGKPKNMYSKAEK) are Mitochondrial intermembrane-facing. Residues 221–241 (IGISFAGGYMAGVLCAIISHP) traverse the membrane as a helical segment. Residues 242 to 269 (ADVMVSKLNSNKKAGEGAGAAAARIYKE) are Mitochondrial matrix-facing. The helical transmembrane segment at 270–290 (IGFSGLWNGLGVRIVMIGTLT) threads the bilayer. Residues 291 to 311 (GAQWLIYDSFKIMCGFPATGA) lie on the Mitochondrial intermembrane side of the membrane.

It belongs to the mitochondrial carrier (TC 2.A.29) family.

Its subcellular location is the mitochondrion inner membrane. Functionally, transport of phosphate groups from the cytosol to the mitochondrial matrix. This Schizosaccharomyces pombe (strain 972 / ATCC 24843) (Fission yeast) protein is Probable mitochondrial phosphate carrier protein.